Reading from the N-terminus, the 371-residue chain is MSL complex subunit 3B (371 aa).

2 disordered regions span residues 1–44 (MATL…READ) and 160–229 (EERA…SPQA). The segment covering 8-44 (PKDDGEGKDEGGSDRGDGDPKPKGKKEVEAHTRREAD) has biased composition (basic and acidic residues). The MRG domain occupies 44 to 367 (DERAVRIPIP…CEAHYSSKNP (324 aa)). Residues 206 to 216 (APRRSTRHSTH) are compositionally biased toward basic residues.

It is found in the nucleus. In terms of biological role, probable non-catalytic component of the MSL histone acetyltransferase complex, a multiprotein complex that mediates the majority of histone H4 acetylation at 'Lys-16' (H4K16ac), an epigenetic mark that prevents chromatin compaction. This chain is MSL complex subunit 3B, found in Rattus norvegicus (Rat).